A 251-amino-acid polypeptide reads, in one-letter code: Dihydroorotate dehydrogenase B (NAD(+)), electron transfer subunit homolog (251 aa).

Positions 2–101 constitute an FAD-binding FR-type domain; that stretch reads LAELNAEVLE…FLPLGKRLFS (100 aa). Positions 217, 222, 225, and 238 each coordinate [2Fe-2S] cluster.

This sequence belongs to the PyrK family. It depends on [2Fe-2S] cluster as a cofactor. FAD is required as a cofactor.

This chain is Dihydroorotate dehydrogenase B (NAD(+)), electron transfer subunit homolog, found in Aquifex aeolicus (strain VF5).